A 510-amino-acid chain; its full sequence is JmjC domain-containing histone demethylation protein 1 (510 aa).

The PHD-type zinc finger occupies 2-53 (PNRCDFCTSSSTKDKQQWTQCDGCDRWVHDVCVSITDPVSYAKYHCPTCTKT). Residues 216 to 365 (TLVRELDLVD…TQIDIAGIEV (150 aa)) form the JmjC domain. A substrate-binding site is contributed by Thr255. Residues His258 and Asp260 each contribute to the Fe cation site. Residue Lys275 coordinates substrate. His333 is a binding site for Fe cation. A disordered region spans residues 475-510 (KGESKEKHKIESQLPEEKILQGSKLESKEEVQTENF). Residues 477 to 510 (ESKEKHKIESQLPEEKILQGSKLESKEEVQTENF) are compositionally biased toward basic and acidic residues.

It belongs to the JHDM1 histone demethylase family. Requires Fe(2+) as cofactor.

It localises to the nucleus. It carries out the reaction N(6),N(6)-dimethyl-L-lysyl(36)-[histone H3] + 2 2-oxoglutarate + 2 O2 = L-lysyl(36)-[histone H3] + 2 formaldehyde + 2 succinate + 2 CO2. Its function is as follows. Histone demethylase that specifically demethylates 'Lys-36' of histone H3, thereby playing a central role in histone code. The polypeptide is JmjC domain-containing histone demethylation protein 1 (JHD1) (Yarrowia lipolytica (strain CLIB 122 / E 150) (Yeast)).